The sequence spans 132 residues: MARKEFRYRGYTLEQLMNMSLEELAKLLPARQRRSLKRGLTPEQKKLLRKIRLAKKGKYNKPIRTHCRDMIVLPEMVGLTIYVHNGKEFVPVEIKPEMIGHYLGEFAPTRKRVQHGAPGIGATRSSMFVAVK.

It belongs to the universal ribosomal protein uS19 family.

Protein S19 forms a complex with S13 that binds strongly to the 16S ribosomal RNA. The protein is Small ribosomal subunit protein uS19 (rps19) of Pyrococcus abyssi (strain GE5 / Orsay).